A 200-amino-acid chain; its full sequence is UPF0488 protein CG14286 (200 aa).

Disordered stretches follow at residues 1-28 and 139-174; these read MHKR…PVAE and KDFR…AEAG.

Belongs to the UPF0488 family.

This Drosophila melanogaster (Fruit fly) protein is UPF0488 protein CG14286.